We begin with the raw amino-acid sequence, 166 residues long: Endoribonuclease YbeY (166 aa).

Residues His136, His140, and His146 each contribute to the Zn(2+) site.

The protein belongs to the endoribonuclease YbeY family. Zn(2+) is required as a cofactor.

It localises to the cytoplasm. Functionally, single strand-specific metallo-endoribonuclease involved in late-stage 70S ribosome quality control and in maturation of the 3' terminus of the 16S rRNA. This Synechococcus sp. (strain CC9605) protein is Endoribonuclease YbeY.